The primary structure comprises 355 residues: uncharacterized protein (355 aa).

Residue 58–65 coordinates ATP; the sequence is GYIIFGIK.

This is an uncharacterized protein from Ureaplasma parvum serovar 3 (strain ATCC 700970).